Here is a 503-residue protein sequence, read N- to C-terminus: 2-isopropylmalate synthase (503 aa).

Positions 1, 189, 191, and 225 each coordinate Mn(2+). One can recognise a Pyruvate carboxyltransferase domain in the interval 1–254 (DGEQALQASL…STNINHKEIY (254 aa)). Residues 379–503 (SLKFFSVQSI…NKNLKNLKKQ (125 aa)) form a regulatory domain region.

This sequence belongs to the alpha-IPM synthase/homocitrate synthase family. LeuA type 1 subfamily. In terms of assembly, homodimer. Requires Mn(2+) as cofactor.

The protein resides in the cytoplasm. The enzyme catalyses 3-methyl-2-oxobutanoate + acetyl-CoA + H2O = (2S)-2-isopropylmalate + CoA + H(+). The protein operates within amino-acid biosynthesis; L-leucine biosynthesis; L-leucine from 3-methyl-2-oxobutanoate: step 1/4. In terms of biological role, catalyzes the condensation of the acetyl group of acetyl-CoA with 3-methyl-2-oxobutanoate (2-ketoisovalerate) to form 3-carboxy-3-hydroxy-4-methylpentanoate (2-isopropylmalate). The chain is 2-isopropylmalate synthase from Buchnera aphidicola subsp. Uroleucon ambrosiae.